Here is a 394-residue protein sequence, read N- to C-terminus: Elongation factor Tu (394 aa).

In terms of domain architecture, tr-type G spans Lys-10–Val-204. The G1 stretch occupies residues Gly-19 to Thr-26. Residue Gly-19–Thr-26 coordinates GTP. Thr-26 is a binding site for Mg(2+). Residues Gly-60 to Ser-64 are G2. The interval Asp-81–Gly-84 is G3. Residues Asp-81 to His-85 and Asn-136 to Asp-139 contribute to the GTP site. Positions Asn-136–Asp-139 are G4. A G5 region spans residues Ser-174–Leu-176.

Belongs to the TRAFAC class translation factor GTPase superfamily. Classic translation factor GTPase family. EF-Tu/EF-1A subfamily. In terms of assembly, monomer.

It is found in the cytoplasm. It catalyses the reaction GTP + H2O = GDP + phosphate + H(+). Functionally, GTP hydrolase that promotes the GTP-dependent binding of aminoacyl-tRNA to the A-site of ribosomes during protein biosynthesis. The sequence is that of Elongation factor Tu from Rickettsia helvetica.